Consider the following 239-residue polypeptide: Ribosomal RNA small subunit methyltransferase G (239 aa).

Residues glycine 77, phenylalanine 82, 128 to 129, and arginine 147 each bind S-adenosyl-L-methionine; that span reads AE.

Belongs to the methyltransferase superfamily. RNA methyltransferase RsmG family.

It localises to the cytoplasm. Functionally, specifically methylates the N7 position of guanine in position 535 of 16S rRNA. The chain is Ribosomal RNA small subunit methyltransferase G from Bacillus cereus (strain ZK / E33L).